The chain runs to 205 residues: Protein DEPP1 (205 aa).

2 stretches are compositionally biased toward polar residues: residues 55–64 and 83–101; these read DKVTAQSRPN and GDSS…SPGT. Residues 55 to 171 are disordered; that stretch reads DKVTAQSRPN…RHQTSDLKSW (117 aa). The span at 138 to 155 shows a compositional bias: basic and acidic residues; the sequence is MGKDTGRLCEARVPEHSL.

It is found in the cytoplasm. Its subcellular location is the peroxisome. It localises to the mitochondrion. In terms of biological role, acts as a critical modulator of FOXO3-induced autophagy via increased cellular ROS. This Mus musculus (Mouse) protein is Protein DEPP1 (Depp1).